We begin with the raw amino-acid sequence, 413 residues long: uncharacterized protein (413 aa).

The next 7 helical transmembrane spans lie at 10–32 (GLTI…GRLP), 162–184 (VFLH…LVFL), 189–211 (LLPR…AFLV), 232–254 (LSFR…LFFF), 259–276 (YSYS…ILLV), 288–310 (ALMV…SFVT), and 325–347 (FAYA…SLIL).

It is found in the cell membrane. This is an uncharacterized protein from Aquifex aeolicus (strain VF5).